Consider the following 328-residue polypeptide: DNA-directed RNA polymerase subunit alpha (328 aa).

Positions 1–231 (MIYQMQMPEK…EHVSLFANFS (231 aa)) are alpha N-terminal domain (alpha-NTD). Residues 252-328 (MRKMLLTRIE…MDITKYQMKG (77 aa)) form an alpha C-terminal domain (alpha-CTD) region.

This sequence belongs to the RNA polymerase alpha chain family. Homodimer. The RNAP catalytic core consists of 2 alpha, 1 beta, 1 beta' and 1 omega subunit. When a sigma factor is associated with the core the holoenzyme is formed, which can initiate transcription.

The enzyme catalyses RNA(n) + a ribonucleoside 5'-triphosphate = RNA(n+1) + diphosphate. Its function is as follows. DNA-dependent RNA polymerase catalyzes the transcription of DNA into RNA using the four ribonucleoside triphosphates as substrates. The protein is DNA-directed RNA polymerase subunit alpha of Chlorobium phaeobacteroides (strain BS1).